Reading from the N-terminus, the 133-residue chain is Large ribosomal subunit protein uL15 (133 aa).

The interval 1–62 is disordered; it reads MALHNLQPAP…GQQPLQRRLP (62 aa). The segment covering 32–45 has biased composition (polar residues); that stretch reads TRGQKGQKSRTGYS.

The protein belongs to the universal ribosomal protein uL15 family. In terms of assembly, part of the 50S ribosomal subunit.

Functionally, binds to the 23S rRNA. This Nitratiruptor sp. (strain SB155-2) protein is Large ribosomal subunit protein uL15.